The sequence spans 378 residues: Inner membrane protein YibH (378 aa).

Residues 1–3 (MDL) are Periplasmic-facing. The chain crosses the membrane as a helical span at residues 4 to 24 (LIVLTYVALAWAVFKIFRIPV). At 25 to 26 (NQ) the chain is on the cytoplasmic side. Residues 27 to 47 (WTLATAALGGVFLVSGLILLM) form a helical membrane-spanning segment. Over 48–54 (NYNHPYT) the chain is Periplasmic. Residues 55–75 (FTAQKAVIAIPITPQVTGIVT) traverse the membrane as a helical segment. At 76 to 232 (EVTDKNNQLI…RAPSNGYVTQ (157 aa)) the chain is on the cytoplasmic side. Residues 233–253 (VLIRPGTYAAALPLRPVMVFI) form a helical membrane-spanning segment. Residues 254 to 280 (PEQKRQIVAQFRQNSLLRLKPGDDAEV) are Periplasmic-facing. Residues 281–301 (VFNALPGQVFHGKLTSILPVV) traverse the membrane as a helical segment. The Cytoplasmic segment spans residues 302 to 309 (PGGSYQAQ). The chain crosses the membrane as a helical span at residues 310–330 (GVLQSLTVVPGTDGVLGTIEL). Residues 331–378 (DPNDDIDALPDGIYAQVAVYSDHFSHVSVMRKVLLRMTSWMHYLYLDH) lie on the Periplasmic side of the membrane.

The protein belongs to the membrane fusion protein (MFP) (TC 8.A.1) family.

It localises to the cell inner membrane. In Escherichia coli O157:H7, this protein is Inner membrane protein YibH (yibH).